The following is a 238-amino-acid chain: MRPSGRTAQQVRPITLTRNFTAHAEGSVLVEFGNTKVICTASVEENVPRWLKGKGKGWVTAEYGMLPRATHTRNRREAASGKQGGRTMEIQRLIARSLRAAVDLEALGEQMITVDCDVIQADGGTRTASITGASVALADAINHMIATGKLKSNPMKGHVAAVSVGIYNGEAICDLEYVEDSAADTDMNVVMMEDGKMIEVQGTAEEAPFSHQELLDMLALAQQGINDIIEKQKAALAE.

Residues Arg-86 and 124 to 126 (GTR) contribute to the phosphate site.

It belongs to the RNase PH family. As to quaternary structure, homohexameric ring arranged as a trimer of dimers.

The catalysed reaction is tRNA(n+1) + phosphate = tRNA(n) + a ribonucleoside 5'-diphosphate. Phosphorolytic 3'-5' exoribonuclease that plays an important role in tRNA 3'-end maturation. Removes nucleotide residues following the 3'-CCA terminus of tRNAs; can also add nucleotides to the ends of RNA molecules by using nucleoside diphosphates as substrates, but this may not be physiologically important. Probably plays a role in initiation of 16S rRNA degradation (leading to ribosome degradation) during starvation. This chain is Ribonuclease PH, found in Aliivibrio fischeri (strain ATCC 700601 / ES114) (Vibrio fischeri).